A 122-amino-acid chain; its full sequence is Protein GL2-INTERACTING REPRESSOR 1 (122 aa).

Positions M1 to L10 are enriched in basic and acidic residues. A disordered region spans residues M1 to E62. The EAR motif lies at K7 to L12. Positions S27–S46 are enriched in low complexity. Residues E47–E62 are compositionally biased toward polar residues.

In terms of assembly, interacts with GL2. Interacts with TPL. As to expression, expressed in root and shoot meristems.

The protein localises to the nucleus. Functionally, acts as a negative regulator of root hair development redundantly with GIR2. GIR1 and GIR2 may function as adapter proteins that associate with GL2 and participate in the control of root hair formation. GIR1 and GIR2 may function as adapter proteins that associate with TPL and participate in the repression of root gene expression. The sequence is that of Protein GL2-INTERACTING REPRESSOR 1 from Arabidopsis thaliana (Mouse-ear cress).